The primary structure comprises 305 residues: Insulin-like peptide (305 aa).

The N-terminal stretch at 1 to 22 (MNLSSVYVLASLAVVCLLVKET) is a signal peptide. 3 cysteine pairs are disulfide-bonded: C28–C87, C40–C100, and C86–C91. The propeptide at 52 to 76 (SVSKRAIDFISEQQAKDYMGAMPHI) is connecting peptide. Residues 102-114 (PYSTAPATATPVR) form a d region. Positions 102–305 (PYSTAPATAT…RDSYHLTELR (204 aa)) are cleaved as a propeptide — d/E peptide. The span at 107–118 (PATATPVRTTEP) shows a compositional bias: low complexity. 2 disordered regions span residues 107–130 (PATA…PLDG) and 236–305 (HNQT…TELR). The e stretch occupies residues 115–305 (TTEPQPEEAE…RDSYHLTELR (191 aa)). Residues 119–128 (QPEEAEDDPL) are compositionally biased toward acidic residues. Composition is skewed to basic and acidic residues over residues 236 to 245 (HNQTDKKEPT) and 291 to 305 (RRIE…TELR).

The protein belongs to the insulin family.

Its subcellular location is the secreted. The chain is Insulin-like peptide (ILP) from Branchiostoma californiense (California lancelet).